We begin with the raw amino-acid sequence, 141 residues long: Universal stress protein A homolog (141 aa).

Belongs to the universal stress protein A family. In terms of assembly, homodimer.

The protein resides in the cytoplasm. Functionally, required for resistance to DNA-damaging agents. This Haemophilus ducreyi (strain 35000HP / ATCC 700724) protein is Universal stress protein A homolog (uspA).